We begin with the raw amino-acid sequence, 255 residues long: 5'-nucleotidase SurE (255 aa).

The a divalent metal cation site is built by D8, D9, S39, and N91.

Belongs to the SurE nucleotidase family. Requires a divalent metal cation as cofactor.

The protein localises to the cytoplasm. It catalyses the reaction a ribonucleoside 5'-phosphate + H2O = a ribonucleoside + phosphate. Functionally, nucleotidase that shows phosphatase activity on nucleoside 5'-monophosphates. This Acinetobacter baumannii (strain AB0057) protein is 5'-nucleotidase SurE.